The primary structure comprises 98 residues: N(2)-fixation sustaining protein CowN (98 aa).

Belongs to the CowN family.

Functionally, is required to sustain N(2)-dependent growth in the presence of low levels of carbon monoxide (CO). Probably acts by protecting the N(2) fixation ability of the nitrogenase complex, which is inactivated in the presence of CO. In Azospirillum sp. (strain B510), this protein is N(2)-fixation sustaining protein CowN.